Here is a 432-residue protein sequence, read N- to C-terminus: Histidinol dehydrogenase (432 aa).

Substrate is bound by residues Ser240, Gln262, and His265. Positions 262 and 265 each coordinate Zn(2+). Active-site proton acceptor residues include Glu330 and His331. Substrate is bound by residues His331, Asp364, Glu418, and His423. Asp364 is a Zn(2+) binding site. His423 is a binding site for Zn(2+).

Belongs to the histidinol dehydrogenase family. Requires Zn(2+) as cofactor.

The catalysed reaction is L-histidinol + 2 NAD(+) + H2O = L-histidine + 2 NADH + 3 H(+). Its pathway is amino-acid biosynthesis; L-histidine biosynthesis; L-histidine from 5-phospho-alpha-D-ribose 1-diphosphate: step 9/9. In terms of biological role, catalyzes the sequential NAD-dependent oxidations of L-histidinol to L-histidinaldehyde and then to L-histidine. The sequence is that of Histidinol dehydrogenase from Wolinella succinogenes (strain ATCC 29543 / DSM 1740 / CCUG 13145 / JCM 31913 / LMG 7466 / NCTC 11488 / FDC 602W) (Vibrio succinogenes).